Here is a 294-residue protein sequence, read N- to C-terminus: Type 4 apparatus protein DotZ (294 aa).

In terms of assembly, the T4BSS is a complex nanomachine composed of several subcomplexes. This subunit is part of the Type IV Coupling Complex (T4CC), a subcomplex composed of the DotLMNYZ core and the IcmSW-LvgA adapter subunits, linked by the C-terminal tail of DotL. Six DotLMNYZ hetero-pentameric units may assemble into a hexameric nanomachine, forming an inner membrane channel for effectors to pass through. Makes significant contact with DotN and DotY, but engages weakly with DotM and DotL. DotY and DotZ are co-dependent for the assembly into the T4CC.

The protein localises to the cytoplasm. Functionally, component of the Dot/Icm type IVB secretion system (T4BSS), which is used to inject bacterial effector proteins into eukaryotic host cells. Part of a subcomplex which recruits effector proteins and delivers them to the core transmembrane subcomplex. DotY and DotZ play a role in effector translocation, but are not essential and do not influence the stability of the subcomplex main components. The DotY/DotZ main function is to optimize secretion by modulating the delivery trajectory of the IcmSW module and the localization of the machinery to the poles. In Legionella pneumophila subsp. pneumophila (strain Philadelphia 1 / ATCC 33152 / DSM 7513), this protein is Type 4 apparatus protein DotZ.